The primary structure comprises 196 residues: MLDRIKVCFTESIQTQIAAAEALPDAISRGAIAMVQSLLNGNKILCCGNGTSAANAQHFAASMINRFEAERPSLPAIALNADNVVLTAIANDRLHEEVYAKQVRALGQAGDVLLAISTRGNSRDIVKAVESAVTRDMTIVALTGYDGGELAGLLGPQDVEIRIPSHRSARIQEMHMLTVNCLCDLIDNTLFPHQND.

In terms of domain architecture, SIS spans 34 to 196; the sequence is MVQSLLNGNK…DNTLFPHQND (163 aa).

Belongs to the SIS family. DiaA subfamily. Homotetramer; dimer of dimers.

In terms of biological role, required for the timely initiation of chromosomal replication via direct interactions with the DnaA initiator protein. The protein is DnaA initiator-associating protein DiaA of Pectobacterium carotovorum subsp. carotovorum (strain PC1).